A 156-amino-acid polypeptide reads, in one-letter code: Protein LlR18B (156 aa).

Aspartate 8 and aspartate 28 together coordinate trans-zeatin. 2 residues coordinate Ca(2+): proline 32 and isoleucine 38. 3 residues coordinate trans-zeatin: lysine 54, glutamate 133, and lysine 136.

The protein belongs to the BetVI family. In terms of tissue distribution, ubiquitous, with higher levels in roots.

It is found in the cytoplasm. Its subcellular location is the cytosol. Functionally, class II ribonuclease (RNase), with low activity on single-strand RNA. Binds to cytokinins. Interacts with melatonin. This chain is Protein LlR18B (LLR18B), found in Lupinus luteus (European yellow lupine).